The primary structure comprises 44 residues: Endochitinase 1 (44 aa).

It belongs to the glycosyl hydrolase 19 family. Chitinase class I subfamily.

The catalysed reaction is Random endo-hydrolysis of N-acetyl-beta-D-glucosaminide (1-&gt;4)-beta-linkages in chitin and chitodextrins.. Its function is as follows. Defense against chitin-containing fungal pathogens. This chain is Endochitinase 1, found in Capsicum chinense (Scotch bonnet).